The primary structure comprises 427 residues: Enolase 2 (427 aa).

Gln165 is a (2R)-2-phosphoglycerate binding site. Glu207 acts as the Proton donor in catalysis. Mg(2+) is bound by residues Asp244, Glu287, and Asp314. The (2R)-2-phosphoglycerate site is built by Lys339, Arg368, Ser369, and Lys390. The Proton acceptor role is filled by Lys339.

This sequence belongs to the enolase family. In terms of assembly, component of the RNA degradosome, a multiprotein complex involved in RNA processing and mRNA degradation. It depends on Mg(2+) as a cofactor.

It is found in the cytoplasm. It localises to the secreted. Its subcellular location is the cell surface. The enzyme catalyses (2R)-2-phosphoglycerate = phosphoenolpyruvate + H2O. It participates in carbohydrate degradation; glycolysis; pyruvate from D-glyceraldehyde 3-phosphate: step 4/5. Functionally, catalyzes the reversible conversion of 2-phosphoglycerate (2-PG) into phosphoenolpyruvate (PEP). It is essential for the degradation of carbohydrates via glycolysis. This Pseudomonas syringae pv. tomato (strain ATCC BAA-871 / DC3000) protein is Enolase 2.